The primary structure comprises 603 residues: F-box only protein 46 (603 aa).

Residues 18-54 (SKYSQNQPRPPSTALKPPVCPDTSSGTEPDHRPAHLE) are disordered. Phosphoserine is present on residues serine 21 and serine 67. 4 disordered regions span residues 113 to 165 (SRAS…SSGD), 235 to 301 (EAQR…TRAK), 332 to 359 (EASEGETPAPTRPEDTPPAPPPPPARDC), and 412 to 442 (QSRGPEGPPEPPPADIPSTVPGPDDSEGTTD). Threonine 347 carries the phosphothreonine modification. Composition is skewed to pro residues over residues 347–356 (TPPAPPPPPA) and 417–426 (EGPPEPPPAD). One can recognise an F-box domain in the interval 470 to 522 (RQYMLLLPEHVLVKIFSFLPTRALAALKCTCHHFKGIIEAFGVRATDSRWSRD).

In terms of assembly, part of a SCF (SKP1-cullin-F-box) protein ligase complex SCF(FBXO46) composed of CUL1, SKP1, RBX1 and FBXO46. Post-translationally, phosphorylated by ATM in response to DNA damage, promoting ubiquitination and degradation by the SCF(FBXO31) complex. In terms of processing, ATM-phosphorylated FBXO46 is ubiquitinated and degradaded by the SCF(FBXO31) complex in response to DNA damage.

The protein operates within protein modification; protein ubiquitination. Substrate-recognition component of the SCF(FBXO46) protein ligase complex, which mediates the ubiquitination and degradation of target proteins. In absence of stress, the SCF(FBXO46) complex catalyzes ubiquitination and degradation of MTOR-phosphorylated FBXO31. The polypeptide is F-box only protein 46 (Fbxo46) (Mus musculus (Mouse)).